The following is a 718-amino-acid chain: Polyphosphate kinase (718 aa).

Asparagine 47 lines the ATP pocket. Arginine 372 and arginine 402 together coordinate Mg(2+). The Phosphohistidine intermediate role is filled by histidine 432. ATP contacts are provided by tyrosine 465, arginine 561, and histidine 589. The disordered stretch occupies residues 683 to 718 (KADHGDTTPTSNAHQFIPMMSPKNEPDASDLDREDD). Positions 709–718 (DASDLDREDD) are enriched in acidic residues.

The protein belongs to the polyphosphate kinase 1 (PPK1) family. The cofactor is Mg(2+). In terms of processing, an intermediate of this reaction is the autophosphorylated ppk in which a phosphate is covalently linked to a histidine residue through a N-P bond.

The catalysed reaction is [phosphate](n) + ATP = [phosphate](n+1) + ADP. Its function is as follows. Catalyzes the reversible transfer of the terminal phosphate of ATP to form a long-chain polyphosphate (polyP). This is Polyphosphate kinase from Lactiplantibacillus plantarum (strain ATCC BAA-793 / NCIMB 8826 / WCFS1) (Lactobacillus plantarum).